The following is a 157-amino-acid chain: Large ribosomal subunit protein uL22 (157 aa).

It belongs to the universal ribosomal protein uL22 family. Part of the 50S ribosomal subunit.

This protein binds specifically to 23S rRNA. It makes multiple contacts with different domains of the 23S rRNA in the assembled 50S subunit and ribosome. Functionally, the globular domain of the protein is located near the polypeptide exit tunnel on the outside of the subunit, while an extended beta-hairpin is found that lines the wall of the exit tunnel in the center of the 70S ribosome. In Methanocorpusculum labreanum (strain ATCC 43576 / DSM 4855 / Z), this protein is Large ribosomal subunit protein uL22.